Reading from the N-terminus, the 186-residue chain is MLNNLEKQTREIVIDVVERSAIQPGNLFVLGLSSSEILGSRIGKQSSLEVGQIVVEVVLDELNKRGVHLAVQGCEHVNRALVVERHVAESKQLEIVNVVPNLHAGGSAQMAAFQLMSDPVEVEEVIAHAGLDIGDTAIGMHIKRVQIPLIPCQRELGGAHVTALASRPKLIGGARADYNMDIIRKS.

This sequence belongs to the UPF0340 family.

The chain is UPF0340 protein M6_Spy1622 from Streptococcus pyogenes serotype M6 (strain ATCC BAA-946 / MGAS10394).